The chain runs to 439 residues: Rho GTPase-activating protein 1 (439 aa).

The residue at position 1 (Met-1) is an N-acetylmethionine. The span at 28 to 48 shows a compositional bias: basic and acidic residues; sequence IDEKNWPSDEMPDFPKSDDSK. Residues 28-55 are disordered; the sequence is IDEKNWPSDEMPDFPKSDDSKSSSPEPV. 4 positions are modified to phosphoserine: Ser-44, Ser-47, Ser-50, and Ser-51. One can recognise a CRAL-TRIO domain in the interval 63–218; the sequence is PYYDIARHQI…QVLKYDDFLK (156 aa). Residue Tyr-65 is modified to Phosphotyrosine. Lys-80 carries the N6-acetyllysine modification. Residues 228–238 carry the SH3-binding motif; the sequence is PKPMPPRPPLP. Positions 244–431 constitute a Rho-GAP domain; sequence VSLQHLQEKS…FLLDHQGELF (188 aa).

Found in a complex with XPO7, EIF4A1, ARHGAP1, VPS26A, VPS29, VPS35 and SFN. Interacts with BNIPL.

It localises to the cytoplasm. In terms of biological role, GTPase activator for the Rho, Rac and Cdc42 proteins, converting them to the putatively inactive GDP-bound state. Cdc42 seems to be the preferred substrate. In Mus musculus (Mouse), this protein is Rho GTPase-activating protein 1 (Arhgap1).